The primary structure comprises 574 residues: Membrane protein insertase YidC (574 aa).

A helical membrane pass occupies residues 6–26 (VFLIFAWLMVAALLWMEWGKD). The interval 45-77 (RDPDAAAPSAANVPSAQPIPQAGAPGTVPATSS) is disordered. 5 helical membrane passes run 356–376 (FSIM…LHSF), 380–400 (WGWA…PLSA), 447–467 (GGCL…WVLV), 489–509 (PYFI…KLTP), and 525–545 (PLVF…YWVV).

Belongs to the OXA1/ALB3/YidC family. Type 1 subfamily. As to quaternary structure, interacts with the Sec translocase complex via SecD. Specifically interacts with transmembrane segments of nascent integral membrane proteins during membrane integration.

The protein resides in the cell inner membrane. In terms of biological role, required for the insertion and/or proper folding and/or complex formation of integral membrane proteins into the membrane. Involved in integration of membrane proteins that insert both dependently and independently of the Sec translocase complex, as well as at least some lipoproteins. Aids folding of multispanning membrane proteins. In Xanthomonas euvesicatoria pv. vesicatoria (strain 85-10) (Xanthomonas campestris pv. vesicatoria), this protein is Membrane protein insertase YidC.